A 421-amino-acid polypeptide reads, in one-letter code: Gamma-glutamyl phosphate reductase (421 aa).

This sequence belongs to the gamma-glutamyl phosphate reductase family.

The protein resides in the cytoplasm. It catalyses the reaction L-glutamate 5-semialdehyde + phosphate + NADP(+) = L-glutamyl 5-phosphate + NADPH + H(+). The protein operates within amino-acid biosynthesis; L-proline biosynthesis; L-glutamate 5-semialdehyde from L-glutamate: step 2/2. In terms of biological role, catalyzes the NADPH-dependent reduction of L-glutamate 5-phosphate into L-glutamate 5-semialdehyde and phosphate. The product spontaneously undergoes cyclization to form 1-pyrroline-5-carboxylate. This chain is Gamma-glutamyl phosphate reductase, found in Shewanella pealeana (strain ATCC 700345 / ANG-SQ1).